Reading from the N-terminus, the 124-residue chain is Small ribosomal subunit protein uS12 (124 aa).

The interval 105-124 (SGVNDRRQGRSKYGAKRPKS) is disordered. Basic residues predominate over residues 113–124 (GRSKYGAKRPKS).

Belongs to the universal ribosomal protein uS12 family. Part of the 30S ribosomal subunit. Contacts proteins S8 and S17. May interact with IF1 in the 30S initiation complex.

Functionally, with S4 and S5 plays an important role in translational accuracy. In terms of biological role, interacts with and stabilizes bases of the 16S rRNA that are involved in tRNA selection in the A site and with the mRNA backbone. Located at the interface of the 30S and 50S subunits, it traverses the body of the 30S subunit contacting proteins on the other side and probably holding the rRNA structure together. The combined cluster of proteins S8, S12 and S17 appears to hold together the shoulder and platform of the 30S subunit. In Idiomarina loihiensis (strain ATCC BAA-735 / DSM 15497 / L2-TR), this protein is Small ribosomal subunit protein uS12.